Consider the following 768-residue polypeptide: Vacuolar basic amino acid transporter 4 (768 aa).

The Cytoplasmic portion of the chain corresponds to 1-252 (MGKKDRQRKK…HDLTRRRIFS (252 aa)). Positions 9–40 (KKLREFAKLKNRQRNLRKSVQTLKNEVQREAK) form a coiled coil. A disordered region spans residues 34 to 172 (EVQREAKVPR…ELPVSSSNSF (139 aa)). 3 positions are modified to phosphoserine: S62, S99, and S106. Residues 110-121 (KPADKANEDDLK) are compositionally biased toward basic and acidic residues. The span at 132-159 (SALQSSITDFSDRSVSPLQSITSCNTPM) shows a compositional bias: polar residues. Phosphoserine is present on residues S160 and S192. The chain crosses the membrane as a helical span at residues 253–273 (SCMCTYLFFIAMDSSIILVIA). Residues 274–282 (SKIASEFHE) are Vacuolar-facing. Residues 283-305 (LWRLSLVISAYLLSNAIGQLVFL) traverse the membrane as a helical segment. Topologically, residues 306–311 (KLSLIS) are cytoplasmic. Residues 312 to 331 (SVKLLLCIAQFSFILGGYLS) form a helical membrane-spanning segment. Residues 332 to 334 (WSS) lie on the Vacuolar side of the membrane. A helical membrane pass occupies residues 335 to 357 (AHFWTFIFARCVTGFGGGSLIAL). Residues 358-375 (KSTIMNRFSQKNDSRYSL) are Cytoplasmic-facing. The chain crosses the membrane as a helical span at residues 376-396 (SASMITFAMGVVIGPFMMNLF). Topologically, residues 397–406 (DSSHGSGWRN) are vacuolar. Residues 407–427 (AFLIPVPFCLVNASIMLADMY) traverse the membrane as a helical segment. The Cytoplasmic segment spans residues 428 to 447 (SVKSTLYGRPTPTLWKRFKN). A helical membrane pass occupies residues 448 to 468 (TLLSPDLYEILTLTLFLLCFV). At 469-481 (QVTSLDLTGLKNN) the chain is on the vacuolar side. N480 carries an N-linked (GlcNAc...) asparagine glycan. The helical transmembrane segment at 482-502 (TMIQALLFSVIIVCGILFFLI) threads the bilayer. The Cytoplasmic segment spans residues 503–522 (ETSDTYMNSVISMSLQGDKR). The helical transmembrane segment at 523 to 543 (LIWTMIGISFCFAALMCIIPF) threads the bilayer. At 544-562 (GTTYFIIVLNLSTLQLAER) the chain is on the vacuolar side. An N-linked (GlcNAc...) asparagine glycan is attached at N553. A helical membrane pass occupies residues 563-583 (LSPFFFSIVLGYFSVSYFWKS). The Cytoplasmic segment spans residues 584–587 (KGQN). The helical transmembrane segment at 588 to 608 (FLLKFVLSGATLLLYVALMGV) threads the bilayer. The Vacuolar segment spans residues 609–617 (SLNLPVWKQ). The helical transmembrane segment at 618–638 (YICLSLPFLGSSMILTLLSNL) threads the bilayer. Residues 639-653 (YHEYHEQRKSPISGS) are Cytoplasmic-facing. The helical transmembrane segment at 654–674 (IVYCFGAVGGTVGISLGGYVF) threads the bilayer. Over 675–734 (HKTLIKLMHEKVMPFSKQGYLKKDLLKIIKHATESSDWVHESAPKFVFQTLIECYLQACR) the chain is Vacuolar. Residues 735-755 (NVFKLSTLFFTITVVAIFIFN) form a helical membrane-spanning segment. Residues 756–768 (RIHCRSQNCLSLS) are Cytoplasmic-facing.

The protein belongs to the major facilitator superfamily.

It localises to the vacuole membrane. In terms of biological role, transporter required for vacuolar uptake of basic amino acids. This chain is Vacuolar basic amino acid transporter 4 (VBA4), found in Saccharomyces cerevisiae (strain ATCC 204508 / S288c) (Baker's yeast).